A 526-amino-acid polypeptide reads, in one-letter code: DDB1- and CUL4-associated factor 17 (526 aa).

Helical transmembrane passes span 200–220 (ILMRVAAFQVFPLQLVGMLEI) and 237–257 (GVLAVSHSSKLVRLYSFEYIV).

Its subcellular location is the membrane. The protein resides in the nucleus. The protein localises to the nucleolus. It participates in protein modification; protein ubiquitination. In terms of biological role, may function as a substrate receptor for CUL4-DDB1 E3 ubiquitin-protein ligase complex. The protein is DDB1- and CUL4-associated factor 17 (dcaf17) of Danio rerio (Zebrafish).